We begin with the raw amino-acid sequence, 236 residues long: 2,3,4,5-tetrahydropyridine-2,6-dicarboxylate N-acetyltransferase (236 aa).

The protein belongs to the transferase hexapeptide repeat family. DapH subfamily.

The enzyme catalyses (S)-2,3,4,5-tetrahydrodipicolinate + acetyl-CoA + H2O = L-2-acetamido-6-oxoheptanedioate + CoA. It functions in the pathway amino-acid biosynthesis; L-lysine biosynthesis via DAP pathway; LL-2,6-diaminopimelate from (S)-tetrahydrodipicolinate (acetylase route): step 1/3. Catalyzes the transfer of an acetyl group from acetyl-CoA to tetrahydrodipicolinate. This chain is 2,3,4,5-tetrahydropyridine-2,6-dicarboxylate N-acetyltransferase, found in Geobacillus kaustophilus (strain HTA426).